A 267-amino-acid polypeptide reads, in one-letter code: Large ribosomal subunit protein bL9m (267 aa).

Residues 1–52 constitute a mitochondrion transit peptide; it reads MAALVVTEPGRALLRAGTERLLRGGIQELLRPRHEGNSPGLARDFSLSQNRG.

Belongs to the bacterial ribosomal protein bL9 family. Component of the mitochondrial ribosome large subunit (39S) which comprises a 16S rRNA and about 50 distinct proteins.

The protein resides in the mitochondrion. In Papio anubis (Olive baboon), this protein is Large ribosomal subunit protein bL9m (MRPL9).